The primary structure comprises 200 residues: Casparian strip membrane protein 1 (200 aa).

The Cytoplasmic segment spans residues 1 to 38; that stretch reads MKSGDHAAIDVPESSAVAKGKAPLIATPREQKSGFKKG. Residues 39–59 form a helical membrane-spanning segment; that stretch reads LGIFDFLLRLGAIIAALAAAA. The Extracellular portion of the chain corresponds to 60-86; that stretch reads TMGTSDETLPFFTQFFQFEASYDDLPT. Residues 87-107 form a helical membrane-spanning segment; that stretch reads FMFFVIAMALIGGYLVLSLPF. Over 108–121 the chain is Cytoplasmic; sequence SIVTIVRPHAVAPR. A helical membrane pass occupies residues 122-142; it reads LLLFILDIVALTLTTAAGAAA. At 143–171 the chain is on the extracellular side; the sequence is AAIVYLAHNGNPNTNWLAICQQFGDFCQE. The helical transmembrane segment at 172 to 192 threads the bilayer; sequence VSGAVVASFVTVVVLMSLVLL. The Cytoplasmic portion of the chain corresponds to 193 to 200; that stretch reads SGVALKKH.

It belongs to the Casparian strip membrane proteins (CASP) family. As to quaternary structure, homodimer and heterodimers.

It is found in the cell membrane. In terms of biological role, regulates membrane-cell wall junctions and localized cell wall deposition. Required for establishment of the Casparian strip membrane domain (CSD) and the subsequent formation of Casparian strips, a cell wall modification of the root endodermis that determines an apoplastic barrier between the intraorganismal apoplasm and the extraorganismal apoplasm and prevents lateral diffusion. This is Casparian strip membrane protein 1 from Theobroma cacao (Cacao).